We begin with the raw amino-acid sequence, 379 residues long: MSLYSETPSAALLPSGFADLLPGEAEAEARGIASVMEAFSRHGYQRVRPPLLEFETSLLGGSGESLAPQTFRLMDPNSHRMMALRPDMTTQIARIASIRLQDAPRPLRLSYSGSCIVVGTPGREADRQISQAGIELIGPDSAQADAEVIALGAKALAELGIEGVSFDLSMPALALGLIEGVIPEADREPLLHALDRKDASAVAELGGPIAGMLAVMLRAAGPADRALDLLASLDYPKDVVGYFERLAASVAAIRERSPDLRLTIDPVDFRGWRYHTGLCVTVFSTSSREELGRGGRYLAGQEPACGLTLRPQALLRAAPVSASRPRCYVPVDLDAASLSGLHKAGYATVSALSHDEDAAAQARHLRCTHVWKDGAARPL.

The protein belongs to the class-II aminoacyl-tRNA synthetase family. HisZ subfamily. In terms of assembly, heteromultimer composed of HisG and HisZ subunits.

It is found in the cytoplasm. The protein operates within amino-acid biosynthesis; L-histidine biosynthesis; L-histidine from 5-phospho-alpha-D-ribose 1-diphosphate: step 1/9. Functionally, required for the first step of histidine biosynthesis. May allow the feedback regulation of ATP phosphoribosyltransferase activity by histidine. The sequence is that of ATP phosphoribosyltransferase regulatory subunit from Gluconobacter oxydans (strain 621H) (Gluconobacter suboxydans).